Reading from the N-terminus, the 244-residue chain is Precorrin-6A reductase (244 aa).

It belongs to the precorrin-6x reductase family.

The catalysed reaction is precorrin-6B + NADP(+) = precorrin-6A + NADPH + 2 H(+). It participates in cofactor biosynthesis; adenosylcobalamin biosynthesis; cob(II)yrinate a,c-diamide from precorrin-2 (aerobic route): step 6/10. Functionally, catalyzes the reduction of the macrocycle of precorrin-6X into precorrin-6Y. The protein is Precorrin-6A reductase (cobK) of Mycobacterium tuberculosis (strain CDC 1551 / Oshkosh).